The sequence spans 488 residues: Katanin p60 ATPase-containing subunit A-like 1 (488 aa).

The segment at 84–184 (FPNPVPEEGP…EQKKFDGTGY (101 aa)) is disordered. Residues 144–167 (KPDRPNTRDGRGNKAKEEKSKRNA) show a composition bias toward basic and acidic residues. Residue 246-253 (GPPGTGKT) coordinates ATP.

Belongs to the AAA ATPase family. Katanin p60 subunit A1 subfamily. A-like 1 sub-subfamily.

Its subcellular location is the cytoplasm. It is found in the cytoskeleton. The protein resides in the spindle pole. It localises to the spindle. It carries out the reaction n ATP + n H2O + a microtubule = n ADP + n phosphate + (n+1) alpha/beta tubulin heterodimers.. Functionally, regulates microtubule dynamics in Sertoli cells, a process that is essential for spermiogenesis and male fertility. Severs microtubules in an ATP-dependent manner, promoting rapid reorganization of cellular microtubule arrays. The chain is Katanin p60 ATPase-containing subunit A-like 1 (katnal1) from Danio rerio (Zebrafish).